A 251-amino-acid chain; its full sequence is MRRKIVAGNWKLHGSRQFANELLGQVAAGLPLEGVDVVILPPLPYLGELVEDFGDTGLAFGAQDVSSNEKGAYTGEVCAAMLVEVGARYGLVGHSERRQYHHESSELVARKFAAAQHAGLVPVLCVGETLEQREAGQTNVVIASQLAPVLELVGAAGFAKAVVAYEPVWAIGTGRTATKEQAQQVHAFIRGEVARIDARIADSLPIVYGGSVKPDNAGELFAQPDVDGGLVGGASLVAADFLAIARAAAAN.

Position 9–11 (9–11 (NWK)) interacts with substrate. Residue histidine 94 is the Electrophile of the active site. Catalysis depends on glutamate 166, which acts as the Proton acceptor. Substrate contacts are provided by residues glycine 172, serine 211, and 232-233 (GG).

The protein belongs to the triosephosphate isomerase family. As to quaternary structure, homodimer.

The protein localises to the cytoplasm. It catalyses the reaction D-glyceraldehyde 3-phosphate = dihydroxyacetone phosphate. Its pathway is carbohydrate biosynthesis; gluconeogenesis. It participates in carbohydrate degradation; glycolysis; D-glyceraldehyde 3-phosphate from glycerone phosphate: step 1/1. Its function is as follows. Involved in the gluconeogenesis. Catalyzes stereospecifically the conversion of dihydroxyacetone phosphate (DHAP) to D-glyceraldehyde-3-phosphate (G3P). The protein is Triosephosphate isomerase of Stenotrophomonas maltophilia (strain R551-3).